We begin with the raw amino-acid sequence, 265 residues long: Shikimate dehydrogenase (NADP(+)) (265 aa).

Shikimate-binding positions include 15–17 (SLS) and threonine 62. Lysine 66 acts as the Proton acceptor in catalysis. Shikimate contacts are provided by asparagine 87 and aspartate 102. NADP(+)-binding positions include 125–129 (GAGGA), 149–154 (NRTLEK), and leucine 209. Tyrosine 211 is a binding site for shikimate. Residue glycine 233 participates in NADP(+) binding.

Belongs to the shikimate dehydrogenase family. Homodimer.

The catalysed reaction is shikimate + NADP(+) = 3-dehydroshikimate + NADPH + H(+). Its pathway is metabolic intermediate biosynthesis; chorismate biosynthesis; chorismate from D-erythrose 4-phosphate and phosphoenolpyruvate: step 4/7. Involved in the biosynthesis of the chorismate, which leads to the biosynthesis of aromatic amino acids. Catalyzes the reversible NADPH linked reduction of 3-dehydroshikimate (DHSA) to yield shikimate (SA). The chain is Shikimate dehydrogenase (NADP(+)) from Legionella pneumophila subsp. pneumophila (strain Philadelphia 1 / ATCC 33152 / DSM 7513).